The sequence spans 487 residues: Glutamyl-tRNA(Gln) amidotransferase subunit A (487 aa).

Catalysis depends on charge relay system residues lysine 79 and serine 154. Serine 178 (acyl-ester intermediate) is an active-site residue.

The protein belongs to the amidase family. GatA subfamily. As to quaternary structure, heterotrimer of A, B and C subunits.

It catalyses the reaction L-glutamyl-tRNA(Gln) + L-glutamine + ATP + H2O = L-glutaminyl-tRNA(Gln) + L-glutamate + ADP + phosphate + H(+). Functionally, allows the formation of correctly charged Gln-tRNA(Gln) through the transamidation of misacylated Glu-tRNA(Gln) in organisms which lack glutaminyl-tRNA synthetase. The reaction takes place in the presence of glutamine and ATP through an activated gamma-phospho-Glu-tRNA(Gln). The chain is Glutamyl-tRNA(Gln) amidotransferase subunit A from Moorella thermoacetica (strain ATCC 39073 / JCM 9320).